We begin with the raw amino-acid sequence, 172 residues long: Envelope protein UL45 (172 aa).

Residues 1-27 (MPLRASEHAYRPLGPGTPPVRARLPAA) are Intravirion-facing. Residues 28–48 (AWVGVGTIIGGVVIIAALVLV) traverse the membrane as a helical; Signal-anchor for type II membrane protein segment. Topologically, residues 49 to 172 (PSRASWALSP…TSTRNALGLP (124 aa)) are virion surface.

Belongs to the herpesviridae HHV-1 UL45 family.

It is found in the virion membrane. Functionally, important virulence factor of HSV neurotropism. Seems to be required for glycoprotein B-induced fusion. Dispensable for growth in vitro. In Homo sapiens (Human), this protein is Envelope protein UL45.